Consider the following 1216-residue polypeptide: Apical endosomal glycoprotein (1216 aa).

Residues 1–21 (MCLPSCLLSIWVLFMAAQSLG) form the signal peptide. The Extracellular portion of the chain corresponds to 22 to 1155 (KTWVPDHCRS…SQGRVAAPVS (1134 aa)). An LDL-receptor class A 1; truncated domain is found at 27 to 54 (DHCRSPTEATCNFVCDCGDCSDEAQCGF). The MAM 1 domain maps to 62-224 (NTPFTCNFEQ…DDMEFWDCGL (163 aa)). Residue Asn205 is glycosylated (N-linked (GlcNAc...) asparagine). The 41-residue stretch at 229–269 (ARCPLGHHHCQNKACVEPHQLCDGEDNCGDSSDEDPLICSH) folds into the LDL-receptor class A 2 domain. 3 disulfide bridges follow: Cys231/Cys243, Cys238/Cys256, and Cys250/Cys267. The MAM 2 domain occupies 268–427 (SHHMATDFET…DLIMSNHCIL (160 aa)). Residues Asn291, Asn341, and Asn368 are each glycosylated (N-linked (GlcNAc...) asparagine). The LDL-receptor class A 3 domain occupies 454–491 (RTCDAGHLSCDELCVPPEQLCDFQQHCAEGEDEEKCGT). Disulfide bonds link Cys456/Cys467, Cys463/Cys480, and Cys474/Cys489. MAM domains are found at residues 492-647 (TDFE…DCNP), 654-813 (DQEV…PCWA), 812-973 (WAAK…PCAQ), and 972-1142 (AQPG…HCKQ). N-linked (GlcNAc...) asparagine glycosylation occurs at Asn639. Asn839 carries N-linked (GlcNAc...) asparagine glycosylation. The helical transmembrane segment at 1156–1176 (VPVAVGGALLLFLLLLGLGGW) threads the bilayer. Residues 1177 to 1216 (HWLQKQHLPCQSTDAAASGFDNILFNADQVTLPESITSNP) are Cytoplasmic-facing.

As to expression, apical endosomal tubules of developing rat intestinal epithelial cells.

The protein localises to the membrane. Its function is as follows. Probably involved in the sorting and selective transport of receptors and ligands across polarized epithelia. In Rattus norvegicus (Rat), this protein is Apical endosomal glycoprotein (Mamdc4).